The sequence spans 775 residues: N6-adenosine-methyltransferase non-catalytic subunit MTB (775 aa).

A compositionally biased stretch (basic and acidic residues) spans 1–10 (MKKKQEESSL). Disordered stretches follow at residues 1 to 424 (MKKK…GAIP) and 520 to 569 (DRGG…EQND). The span at 40–49 (FESSSRSGGS) shows a compositional bias: low complexity. 5 stretches are compositionally biased toward basic and acidic residues: residues 50 to 79 (KSKE…ERTH), 100 to 117 (DGDH…DSGG), 125 to 222 (EHGE…LKDN), 229 to 278 (SSGD…RGEA), and 333 to 344 (EWAHNQEGRQRS). The segment covering 375–400 (QRGSTPGRTNFVQTPNRGYQTPQGTR) has biased composition (polar residues).

The protein belongs to the MT-A70-like family. As to quaternary structure, forms homodimers. Interacts with HAKAI, MTA and VIR. Associates with MTA, FIP37, VIR and HAKAI to form the m6A writer complex which is essential for adenosine methylation at specific mRNA sequences.

The protein localises to the nucleus speckle. Its subcellular location is the nucleus. It is found in the nucleoplasm. Its function is as follows. Probable non-catalytic subunit of the N6-methyltransferase complex, a multiprotein complex that mediates N6-methyladenosine (m6A) methylation at the 5'-[AG]GAC-3' consensus sites of some mRNAs. Associates with MTA, FIP37, VIR and HAKAI to form the m6A writer complex which is essential for adenosine methylation at specific mRNA sequences. N6-methyladenosine (m6A) plays a role in mRNA stability, processing, translation efficiency and editing. The polypeptide is N6-adenosine-methyltransferase non-catalytic subunit MTB (Arabidopsis thaliana (Mouse-ear cress)).